We begin with the raw amino-acid sequence, 73 residues long: Translational regulator CsrA (73 aa).

The protein belongs to the CsrA/RsmA family. In terms of assembly, homodimer; the beta-strands of each monomer intercalate to form a hydrophobic core, while the alpha-helices form wings that extend away from the core.

Its subcellular location is the cytoplasm. A translational regulator that binds mRNA to regulate translation initiation and/or mRNA stability. Usually binds in the 5'-UTR at or near the Shine-Dalgarno sequence preventing ribosome-binding, thus repressing translation. Its main target seems to be the major flagellin gene, while its function is anatagonized by FliW. The polypeptide is Translational regulator CsrA (Thermosipho africanus (strain TCF52B)).